The following is a 372-amino-acid chain: Riboflavin biosynthesis protein RibD (372 aa).

The tract at residues 1-150 is deaminase; it reads MLEFSSQDCV…KGFLKRMRQG (150 aa). Positions 6-128 constitute a CMP/dCMP-type deaminase domain; sequence SQDCVFMQRA…MLSDAGIEST (123 aa). His55 is a binding site for Zn(2+). The active-site Proton donor is the Glu57. The Zn(2+) site is built by Cys80 and Cys89. A reductase region spans residues 151 to 372; it reads MPFVQLKLAM…IKLTYTPKGV (222 aa). NADP(+) contacts are provided by residues Ala159 and 166 to 169; that span reads TAMA. A substrate-binding site is contributed by Ser173. Trp175 contributes to the NADP(+) binding site. Arg189 contacts substrate. Residues Thr201 and Asp205 each contribute to the NADP(+) site. Positions 209 and 212 each coordinate substrate. Ser239 contacts NADP(+). Glu302 provides a ligand contact to substrate. 304 to 310 serves as a coordination point for NADP(+); the sequence is GANLSGS.

In the N-terminal section; belongs to the cytidine and deoxycytidylate deaminase family. It in the C-terminal section; belongs to the HTP reductase family. The cofactor is Zn(2+).

The catalysed reaction is 2,5-diamino-6-hydroxy-4-(5-phosphoribosylamino)-pyrimidine + H2O + H(+) = 5-amino-6-(5-phospho-D-ribosylamino)uracil + NH4(+). It carries out the reaction 5-amino-6-(5-phospho-D-ribitylamino)uracil + NADP(+) = 5-amino-6-(5-phospho-D-ribosylamino)uracil + NADPH + H(+). Its pathway is cofactor biosynthesis; riboflavin biosynthesis; 5-amino-6-(D-ribitylamino)uracil from GTP: step 2/4. It participates in cofactor biosynthesis; riboflavin biosynthesis; 5-amino-6-(D-ribitylamino)uracil from GTP: step 3/4. Functionally, converts 2,5-diamino-6-(ribosylamino)-4(3h)-pyrimidinone 5'-phosphate into 5-amino-6-(ribosylamino)-2,4(1h,3h)-pyrimidinedione 5'-phosphate. The polypeptide is Riboflavin biosynthesis protein RibD (ribD) (Haemophilus influenzae (strain ATCC 51907 / DSM 11121 / KW20 / Rd)).